The following is a 2804-amino-acid chain: Nipped-B-like protein (2804 aa).

Composition is skewed to polar residues over residues 128–173 and 191–208; these read LSQN…QNSP and HPSS…SVSS. Positions 128–340 are disordered; sequence LSQNSMHSSP…LGKDEKEQSE (213 aa). 2 positions are modified to phosphoserine: Ser150 and Ser162. A compositionally biased stretch (basic and acidic residues) spans 234–249; it reads HHADNPRHGSSEDYLH. A phosphoserine mark is found at Ser243, Ser256, Ser274, Ser280, Ser284, Ser301, Ser306, and Ser318. Positions 331-340 are enriched in basic and acidic residues; that stretch reads LGKDEKEQSE. The residue at position 350 (Ser350) is a Phosphoserine. Residues 482 to 500 are compositionally biased toward basic and acidic residues; it reads RESAIERERFSKEVQDKDK. The disordered stretch occupies residues 482–946; sequence RESAIERERF…NKAEFPSYLL (465 aa). Residues 523–534 are compositionally biased toward polar residues; sequence PASQETGSTGNG. Basic and acidic residues-rich tracts occupy residues 562 to 572, 593 to 663, 672 to 685, and 694 to 939; these read DSIKKPEEIKQ, PENH…ECKQ, KQNE…KPND, and ETTK…DNKA. Phosphothreonine is present on residues Thr713 and Thr746. At Ser912 the chain carries Phosphoserine. A PxVxL motif motif is present at residues 996-1009; sequence NKGAKPVVVLQKLS. Disordered stretches follow at residues 1017 to 1047 and 1060 to 1191; these read IKDR…DQSV and ESTM…LTPE. Lys1082 is subject to N6-acetyllysine. Residues Ser1089, Ser1090, and Ser1096 each carry the phosphoserine modification. A compositionally biased stretch (acidic residues) spans 1089 to 1100; the sequence is SSDEDNDSDEAF. Residues 1109 to 1139 are compositionally biased toward basic and acidic residues; that stretch reads KDDDKAWEYEERDRRSSGDHRRSGHSHEGRR. 3 positions are modified to phosphoserine: Ser1150, Ser1152, and Ser1154. Tyr1159 is subject to Phosphotyrosine. Ser1160 bears the Phosphoserine mark. Basic residues predominate over residues 1171–1182; that stretch reads KMKKKEKQKKRK. Thr1189 is modified (phosphothreonine). Ser1197 is subject to Phosphoserine. Residues 1691-1710 form a disordered region; it reads AMKSQKDEESSEGTHHAKEI. HEAT repeat units follow at residues 1767 to 1805, 1843 to 1881, 1945 to 1984, 2227 to 2267, and 2313 to 2351; these read AQSF…VDPS, PQLA…EQPT, YDWF…HILK, VNLK…LKEM, and LIHP…KYAG. Residues 2473–2489 are compositionally biased toward basic and acidic residues; that stretch reads VKDKRKERKSSPSKENE. Disordered stretches follow at residues 2473-2520 and 2651-2696; these read VKDK…DDIN and TSLL…DSTE. Residues Ser2493, Ser2509, Ser2511, Ser2513, Ser2515, Ser2652, and Ser2658 each carry the phosphoserine modification. Acidic residues predominate over residues 2510–2519; sequence DSDSDSEDDI. Thr2667 carries the phosphothreonine modification. Residue Ser2672 is modified to Phosphoserine.

It belongs to the SCC2/Nipped-B family. Heterodimerizes with MAU2/SCC4 to form the cohesin loading complex. The NIPBL-MAU2 heterodimer interacts with the cohesin complex composed of SMC1A/B and SMC3 heterodimer, RAD21 and STAG1/SA1. NIPBL directly contacts all members of the complex, RAD21, SMC1A/B, SMC3 and STAG1. Interacts directly (via PxVxL motif) with CBX5. Interacts with ZNF609 (via N-terminus). Interacts with the multiprotein complex Integrator. Interacts (via PxVxL motif) with CBX3. Interacts with BRD4. As to expression, widely expressed. Highly expressed in heart, skeletal muscle, fetal and adult liver, fetal and adult kidney. Expressed at intermediates level in thymus, placenta, peripheral leukocyte and small intestine. Weakly or not expressed in brain, colon, spleen and lung.

Its subcellular location is the nucleus. It is found in the chromosome. Plays an important role in the loading of the cohesin complex on to DNA. Forms a heterodimeric complex (also known as cohesin loading complex) with MAU2/SCC4 which mediates the loading of the cohesin complex onto chromatin. Plays a role in cohesin loading at sites of DNA damage. Its recruitment to double-strand breaks (DSBs) sites occurs in a CBX3-, RNF8- and RNF168-dependent manner whereas its recruitment to UV irradiation-induced DNA damage sites occurs in a ATM-, ATR-, RNF8- and RNF168-dependent manner. Along with ZNF609, promotes cortical neuron migration during brain development by regulating the transcription of crucial genes in this process. Preferentially binds promoters containing paused RNA polymerase II. Up-regulates the expression of SEMA3A, NRP1, PLXND1 and GABBR2 genes, among others. This is Nipped-B-like protein (NIPBL) from Homo sapiens (Human).